We begin with the raw amino-acid sequence, 92 residues long: MGRSLKKGPFVADHLLRKIEALNERNAKEVIKTWSRASTIVPEMIGHTIAVHNGKQHVPVYITEQMVGHKLGEFAPTRNFRSHVKGDKKARH.

The protein belongs to the universal ribosomal protein uS19 family.

Protein S19 forms a complex with S13 that binds strongly to the 16S ribosomal RNA. The protein is Small ribosomal subunit protein uS19 of Thermosynechococcus vestitus (strain NIES-2133 / IAM M-273 / BP-1).